Consider the following 357-residue polypeptide: MGNCDSRELAEQTKQSKKINTELAIAKKDDENVIKLLLLGAGESGKSTVLKQMRIIHNSGFSQEESMTKRNVVCANTIQAMGALIEGMRQLRIDFVNRICNAHEKLIRETLSENTEYNPFNDAMYTALSDLWADKGIQSAYGKRELFYLADSAKYFFDSLARINEPNYIPTENDILHTRVPTMGVIEVKFQMKGKVFRVFDVGGQRSQRKKWIHCFDDAKALIYVASLSEYDQVLLEDNTTNRMQESLQLFKQVVNNKYFVNTSVILFLNKVDLFEEKIIIKKRSLTIAFDAYTGPQEDVEAAITFIDSKYRAMADNKDKNIYVHKTCATDTHQVQYVLDAVLDTILSSKLKGCGLF.

The N-myristoyl glycine moiety is linked to residue glycine 2. Cysteine 4 carries S-palmitoyl cysteine lipidation. One can recognise a G-alpha domain in the interval 32 to 357 (NVIKLLLLGA…SSKLKGCGLF (326 aa)). The G1 motif stretch occupies residues 35 to 48 (KLLLLGAGESGKST). Glutamate 43, serine 44, glycine 45, lysine 46, serine 47, threonine 48, aspartate 151, leucine 176, threonine 182, glycine 204, asparagine 270, lysine 271, aspartate 273, and alanine 329 together coordinate GTP. Serine 47 provides a ligand contact to Mg(2+). Positions 174–182 (DILHTRVPT) are G2 motif. Threonine 182 contacts Mg(2+). The G3 motif stretch occupies residues 197–206 (FRVFDVGGQR). Residues 266–273 (ILFLNKVD) form a G4 motif region. The segment at 327–332 (TCATDT) is G5 motif.

It belongs to the G-alpha family. G(q) subfamily. In terms of assembly, g proteins are composed of 3 units; alpha, beta and gamma. The alpha chain contains the guanine nucleotide binding site. It depends on Mg(2+) as a cofactor.

Guanine nucleotide-binding proteins (G proteins) are involved as modulators or transducers in various transmembrane signaling systems. The protein is Guanine nucleotide-binding protein alpha-1 subunit (gpa-1) of Caenorhabditis briggsae.